A 314-amino-acid chain; its full sequence is Secreted frizzled-related protein 5 (314 aa).

The first 21 residues, 1–21 (MWVAWSARTAALALLLGALHG), serve as a signal peptide directing secretion. The region spanning 45–162 (SKPPQCLDIP…PLDNDLCIAV (118 aa)) is the FZ domain. 8 disulfides stabilise this stretch: C50-C113, C60-C106, C97-C132, C121-C159, C125-C149, C178-C250, C181-C252, and C195-C300. One can recognise an NTR domain in the interval 178–300 (CAQCEMEHSA…AVKFMFSYPC (123 aa)).

The protein belongs to the secreted frizzled-related protein (sFRP) family.

It is found in the secreted. Functionally, soluble frizzled-related proteins (sFRPS) function as modulators of Wnt signaling through direct interaction with Wnts. They have a role in regulating cell growth and differentiation in specific cell types. SFRP5 may be involved in determining the polarity of photoreceptor, and perhaps, other cells in the retina. In Mus musculus (Mouse), this protein is Secreted frizzled-related protein 5 (Sfrp5).